The primary structure comprises 337 residues: Phenylalanine--tRNA ligase alpha subunit (337 aa).

E258 is a Mg(2+) binding site.

This sequence belongs to the class-II aminoacyl-tRNA synthetase family. Phe-tRNA synthetase alpha subunit type 1 subfamily. Tetramer of two alpha and two beta subunits. Mg(2+) serves as cofactor.

Its subcellular location is the cytoplasm. It carries out the reaction tRNA(Phe) + L-phenylalanine + ATP = L-phenylalanyl-tRNA(Phe) + AMP + diphosphate + H(+). In Burkholderia cenocepacia (strain ATCC BAA-245 / DSM 16553 / LMG 16656 / NCTC 13227 / J2315 / CF5610) (Burkholderia cepacia (strain J2315)), this protein is Phenylalanine--tRNA ligase alpha subunit.